The primary structure comprises 174 residues: FMN-dependent NADPH-azoreductase (174 aa).

Residues 9–11, 15–16, 73–76, and Gly106 each bind FMN; these read TPR, RT, and EYHS.

The protein belongs to the azoreductase type 2 family. In terms of assembly, homotetramer. The cofactor is FMN.

Functionally, catalyzes the reductive cleavage of azo bond in aromatic azo compounds to the corresponding amines. Requires NADPH, but not NADH, as an electron donor for its activity. This is FMN-dependent NADPH-azoreductase (azr) from Bacillus subtilis (strain 168).